The following is a 734-amino-acid chain: Photosystem I P700 chlorophyll a apoprotein A2 (734 aa).

The next 8 helical transmembrane spans lie at 46–69 (IFAS…FHVA), 135–158 (LYSG…LHLQ), 175–199 (LNHH…HVAI), 273–291 (MAHH…GHMY), 330–353 (LHFQ…QHMY), 369–395 (AALY…IFFI), 417–439 (AIIS…LYVH), and 517–535 (FLVH…LILV). [4Fe-4S] cluster is bound by residues Cys559 and Cys568. Helical transmembrane passes span 575–596 (AFYL…YWHW) and 643–665 (LSVW…MFLI). Chlorophyll a contacts are provided by His654, Met662, and Tyr670. A phylloquinone-binding site is contributed by Trp671. The helical transmembrane segment at 707–727 (LVGLAHFSVGYIFTYAAFLIA) threads the bilayer.

It belongs to the PsaA/PsaB family. In terms of assembly, the PsaA/B heterodimer binds the P700 chlorophyll special pair and subsequent electron acceptors. PSI consists of a core antenna complex that captures photons, and an electron transfer chain that converts photonic excitation into a charge separation. The eukaryotic PSI reaction center is composed of at least 11 subunits. The cofactor is P700 is a chlorophyll a/chlorophyll a' dimer, A0 is one or more chlorophyll a, A1 is one or both phylloquinones and FX is a shared 4Fe-4S iron-sulfur center..

The protein resides in the plastid. It localises to the chloroplast thylakoid membrane. It carries out the reaction reduced [plastocyanin] + hnu + oxidized [2Fe-2S]-[ferredoxin] = oxidized [plastocyanin] + reduced [2Fe-2S]-[ferredoxin]. Functionally, psaA and PsaB bind P700, the primary electron donor of photosystem I (PSI), as well as the electron acceptors A0, A1 and FX. PSI is a plastocyanin-ferredoxin oxidoreductase, converting photonic excitation into a charge separation, which transfers an electron from the donor P700 chlorophyll pair to the spectroscopically characterized acceptors A0, A1, FX, FA and FB in turn. Oxidized P700 is reduced on the lumenal side of the thylakoid membrane by plastocyanin. This is Photosystem I P700 chlorophyll a apoprotein A2 from Antirrhinum majus (Garden snapdragon).